The following is a 117-amino-acid chain: MVKKMVIAVRKDLDMGKGKIAAQVAHAAVTCAIRSMKINRDVFNEWYDEGQRKIVVKVNDLDEIMEIKRMADSMGIVNEIVQDRGYTQVEPGTITCIGLGPDEEEKLDKITGKYKLL.

Belongs to the PTH2 family.

The protein localises to the cytoplasm. The enzyme catalyses an N-acyl-L-alpha-aminoacyl-tRNA + H2O = an N-acyl-L-amino acid + a tRNA + H(+). Functionally, the natural substrate for this enzyme may be peptidyl-tRNAs which drop off the ribosome during protein synthesis. The chain is Peptidyl-tRNA hydrolase from Thermoplasma acidophilum (strain ATCC 25905 / DSM 1728 / JCM 9062 / NBRC 15155 / AMRC-C165).